The chain runs to 230 residues: MDNKIIVALDYETEAEALNFVDQVDPSLCRLKVGKEMFTTLGTHFVKQLQDRKFDVFLDLKYHDIPNTVARAVRSAADLGVWMVDLHACGGLRMMETAKQILEPYGKDAPLLIGVTVLTSMEDLDLLQIGINASPMEQVIRLAHLCQRAGLDGVVCSPQEVEVLRTHCGKDFKLVTPGIRPEGSDFGDQRRVMTPKQAIEIGSDYLVIGRPITQAADPLAVLKSINQSIA.

Substrate is bound by residues D10, K32, 59 to 68 (DLKYHDIPNT), T119, R180, Q189, G209, and R210. The Proton donor role is filled by K61.

Belongs to the OMP decarboxylase family. Type 1 subfamily. As to quaternary structure, homodimer.

The enzyme catalyses orotidine 5'-phosphate + H(+) = UMP + CO2. It functions in the pathway pyrimidine metabolism; UMP biosynthesis via de novo pathway; UMP from orotate: step 2/2. Catalyzes the decarboxylation of orotidine 5'-monophosphate (OMP) to uridine 5'-monophosphate (UMP). The sequence is that of Orotidine 5'-phosphate decarboxylase from Glaesserella parasuis serovar 5 (strain SH0165) (Haemophilus parasuis).